The sequence spans 953 residues: Nonsense-mediated mRNA decay factor SMG8 (953 aa).

Disordered regions lie at residues 571 to 604 (AQDAELDPDEEDEELPTGEREEQHITQSNGCSQP) and 629 to 653 (PCFDQSSSSEAESTCSGTSSEESNN). The span at 574-586 (AELDPDEEDEELP) shows a compositional bias: acidic residues. The segment covering 595–604 (ITQSNGCSQP) has biased composition (polar residues). Residues 634–653 (SSSSEAESTCSGTSSEESNN) show a composition bias toward low complexity.

The protein belongs to the SMG8 family.

Involved in nonsense-mediated decay (NMD) of mRNAs containing premature stop codons. Probable component of kinase complex containing nonC and recruited to stalled ribosomes. The protein is Nonsense-mediated mRNA decay factor SMG8 of Drosophila persimilis (Fruit fly).